The following is a 593-amino-acid chain: NADH-quinone oxidoreductase subunit C/D (593 aa).

Residues 1-184 form an NADH dehydrogenase I subunit C region; the sequence is MTADSVLSIP…DPYSLSAAKQ (184 aa). The segment at 208-593 is NADH dehydrogenase I subunit D; that stretch reads DFMFLNLGPN…IDFVMADVDR (386 aa).

It in the N-terminal section; belongs to the complex I 30 kDa subunit family. In the C-terminal section; belongs to the complex I 49 kDa subunit family. NDH-1 is composed of 13 different subunits. Subunits NuoB, CD, E, F, and G constitute the peripheral sector of the complex.

The protein resides in the cell inner membrane. The catalysed reaction is a quinone + NADH + 5 H(+)(in) = a quinol + NAD(+) + 4 H(+)(out). Functionally, NDH-1 shuttles electrons from NADH, via FMN and iron-sulfur (Fe-S) centers, to quinones in the respiratory chain. The immediate electron acceptor for the enzyme in this species is believed to be ubiquinone. Couples the redox reaction to proton translocation (for every two electrons transferred, four hydrogen ions are translocated across the cytoplasmic membrane), and thus conserves the redox energy in a proton gradient. This chain is NADH-quinone oxidoreductase subunit C/D, found in Azotobacter vinelandii (strain DJ / ATCC BAA-1303).